The sequence spans 113 residues: U11-theraphotoxin-Hhn1a (113 aa).

Positions 1–21 are cleaved as a signal peptide; it reads MNTVRVTFLLVFVLAVSLGQA. Positions 22-74 are excised as a propeptide; that stretch reads DKDENRMEMQGKTEQGKSYLDFAENLLLQKLEELEAKLLEEDSEESRNSRQKR. 3 disulfide bridges follow: Cys-75–Cys-90, Cys-82–Cys-95, and Cys-89–Cys-110.

This sequence belongs to the neurotoxin 14 (magi-1) family. 01 (HNTX-16) subfamily. In terms of tissue distribution, expressed by the venom gland.

The protein localises to the secreted. Probable ion channel inhibitor. This is U11-theraphotoxin-Hhn1a from Cyriopagopus hainanus (Chinese bird spider).